Reading from the N-terminus, the 472-residue chain is Relaxin-3 receptor 1 (472 aa).

At 1–81 the chain is on the extracellular side; it reads MQVASATPAA…ESTDTEARVR (81 aa). Residues N36 and N40 are each glycosylated (N-linked (GlcNAc...) asparagine). A helical transmembrane segment spans residues 82 to 102; sequence ILISAVYWVVCALGLAGNLLV. Over 103 to 119 the chain is Cytoplasmic; that stretch reads LYLMKSKQGWRKSSINL. A helical transmembrane segment spans residues 120-140; it reads FVTNLALTDFQFVLTLPFWAV. Topologically, residues 141–156 are extracellular; it reads ENALDFKWPFGKAMCK. The cysteines at positions 155 and 247 are disulfide-linked. The chain crosses the membrane as a helical span at residues 157 to 177; that stretch reads IVSMVTSMNMYASVFFLTAMS. Residues 178–215 lie on the Cytoplasmic side of the membrane; the sequence is VARYHSVASALKSHRTRGRGRGDCCGQSLRESCCFSAK. The chain crosses the membrane as a helical span at residues 216 to 236; sequence VLCGLIWASAALASLPNAIFS. Residues 237 to 270 lie on the Extracellular side of the membrane; sequence TTIRVLGEELCLMHFPDKLLGWDRQFWLGLYHLQ. The helical transmembrane segment at 271 to 291 threads the bilayer; it reads KVLLGFLLPLSIISLCYLLLV. The Cytoplasmic segment spans residues 292–298; sequence RFISDRR. A helical transmembrane segment spans residues 299–319; sequence VVGTTDAVGAAAAPGGGLSTA. Over 320 to 332 the chain is Extracellular; sequence SARRRSKVTKSVT. A helical transmembrane segment spans residues 333 to 353; it reads IVVLSFFLCWLPNQALTTWSI. The Cytoplasmic portion of the chain corresponds to 354-472; it reads LIKFNAVPFS…YDLLPSSSAY (119 aa).

It belongs to the G-protein coupled receptor 1 family.

Its subcellular location is the cell membrane. Receptor for RNL3/relaxin-3. Binding of the ligand inhibit cAMP accumulation. The sequence is that of Relaxin-3 receptor 1 (Rxfp3) from Mus musculus (Mouse).